Reading from the N-terminus, the 207-residue chain is 8-oxoguanine DNA glycosylase/AP lyase (207 aa).

Active-site residues include K128 and D146.

It belongs to the type-2 OGG1 family.

The enzyme catalyses 2'-deoxyribonucleotide-(2'-deoxyribose 5'-phosphate)-2'-deoxyribonucleotide-DNA = a 3'-end 2'-deoxyribonucleotide-(2,3-dehydro-2,3-deoxyribose 5'-phosphate)-DNA + a 5'-end 5'-phospho-2'-deoxyribonucleoside-DNA + H(+). In terms of biological role, catalyzes the excision of an oxidatively damaged form of guanine (7,8-dihydro-8-oxoguanine = 8-oxoG) from DNA. Also cleaves the DNA backbone at apurinic/apyrimidinic sites (AP sites). The protein is 8-oxoguanine DNA glycosylase/AP lyase of Saccharolobus islandicus (strain L.S.2.15 / Lassen #1) (Sulfolobus islandicus).